The primary structure comprises 1308 residues: Receptor tyrosine-protein kinase erbB-4 (1308 aa).

Positions 1–25 (MKPATGLWVWVSLLVAAGTVQPSDS) are cleaved as a signal peptide. Residues 26 to 651 (QSVCAGTENK…STLPQHARTP (626 aa)) are Extracellular-facing. A disulfide bridge connects residues Cys29 and Cys56. 3 N-linked (GlcNAc...) asparagine glycosylation sites follow: Asn138, Asn174, and Asn181. Intrachain disulfides connect Cys156–Cys186, Cys189–Cys197, Cys193–Cys205, Cys213–Cys221, Cys217–Cys229, Cys230–Cys238, Cys234–Cys246, Cys249–Cys258, Cys262–Cys289, Cys293–Cys304, Cys308–Cys323, and Cys326–Cys330. A glycan (N-linked (GlcNAc...) asparagine) is linked at Asn253. N-linked (GlcNAc...) asparagine glycans are attached at residues Asn358, Asn410, Asn473, and Asn495. Disulfide bonds link Cys503/Cys512, Cys507/Cys520, Cys523/Cys532, Cys536/Cys552, Cys555/Cys569, Cys559/Cys577, Cys580/Cys589, Cys593/Cys614, Cys617/Cys625, and Cys621/Cys633. A glycan (N-linked (GlcNAc...) asparagine) is linked at Asn548. Asn576 carries N-linked (GlcNAc...) asparagine glycosylation. Residue Asn620 is glycosylated (N-linked (GlcNAc...) asparagine). The helical transmembrane segment at 652–675 (LIAAGVIGGLFILVIVGLTFAVYV) threads the bilayer. A Nuclear localization signal motif is present at residues 676–684 (RRKSIKKKR). Over 676–1308 (RRKSIKKKRA…PPYRHRNTVV (633 aa)) the chain is Cytoplasmic. The Protein kinase domain occupies 718-985 (LKRVKVLGSG…RMARDPQRYL (268 aa)). ATP-binding positions include 724–732 (LGSGAFGTV), Lys751, 797–799 (QLM), and 843–848 (DLAARN). Asp843 serves as the catalytic Proton acceptor. 10 positions are modified to phosphotyrosine; by autocatalysis: Tyr875, Tyr1035, Tyr1056, Tyr1150, Tyr1162, Tyr1188, Tyr1202, Tyr1242, Tyr1258, and Tyr1284. 2 short sequence motifs (PPxY motif) span residues 1032-1035 (PPIY) and 1053-1056 (PPAY). Residues 1117 to 1150 (PHVQEDSSTQRYSADPTVFAPERSPRGELDEEGY) are disordered. The PPxY motif 3 signature appears at 1298-1301 (PPPY). The PDZ-binding motif lies at 1306-1308 (TVV).

The protein belongs to the protein kinase superfamily. Tyr protein kinase family. EGF receptor subfamily. As to quaternary structure, monomer in the absence of bound ligand. Homodimer or heterodimer with another ERBB family member upon ligand binding, thus forming heterotetramers. Interacts with EGFR and ERBB2. Interacts with CBFA2T3. Interacts with DLG2 (via its PDZ domain), DLG3 (via its PDZ domain), DLG4 (via its PDZ domain) and SNTB2 (via its PDZ domain). Interacts with MUC1. Interacts (via its PPxy motifs) with WWOX. Interacts (via the PPxY motif 3 of isoform JM-A CYT-2) with YAP1 (via the WW domain 1 of isoform 1). Interacts (isoform JM-A CYT-1 and isoform JM-B CYT-1) with WWP1. Interacts (via its intracellular domain) with TRIM28. Interacts (via the intracellular domains of both CYT-1 and CYT-2 isoforms) with KAP1; the interaction does not phosphorylate KAP1 but represses ERBB4-mediated transcriptional activity. Interacts with PRPU, DDX23, MATR3, RBM15, ILF3, KAP1, U5S1, U2SURP, ITCH, HNRNPU, AP2A1, NULC, LEO1, WWP2, IGHG1, HXK1, GRB7 and SRRT. Interacts (phosphorylated isoform JM-A CYT-1 and isoform JM-B CYT-1) with PIK3R1. Interacts with SHC1. Interacts with GRB2. Interacts (soluble intracellular domain) with STAT5A. Interacts (soluble intracellular domain) with BCL2. Interacts (phosphorylated) with STAT1. In terms of processing, isoform JM-A CYT-1 and isoform JM-A CYT-2 are processed by ADAM17. Proteolytic processing in response to ligand or 12-O-tetradecanoylphorbol-13-acetate stimulation results in the production of 120 kDa soluble receptor forms and intermediate membrane-anchored 80 kDa fragments (m80HER4), which are further processed by a presenilin-dependent gamma-secretase to release a cytoplasmic intracellular domain (E4ICD; E4ICD1/s80Cyt1 or E4ICD2/s80Cyt2, depending on the isoform). Membrane-anchored 80 kDa fragments of the processed isoform JM-A CYT-1 are more readily degraded by the proteasome than fragments of isoform JM-A CYT-2, suggesting a prevalence of E4ICD2 over E4ICD1. Isoform JM-B CYT-1 and isoform JM-B CYT-2 lack the ADAM17 cleavage site and are not processed by ADAM17, precluding further processing by gamma-secretase. Post-translationally, autophosphorylated on tyrosine residues in response to ligand binding. Autophosphorylation occurs in trans, i.e. one subunit of the dimeric receptor phosphorylates tyrosine residues on the other subunit. Ligands trigger phosphorylation at specific tyrosine residues, thereby creating binding sites for scaffold proteins and effectors. Constitutively phosphorylated at a basal level when overexpressed in heterologous systems; ligand binding leads to increased phosphorylation. Phosphorylation at Tyr-1035 is important for interaction with STAT1. Phosphorylation at Tyr-1056 is important for interaction with PIK3R1. Phosphorylation at Tyr-1242 is important for interaction with SHC1. Phosphorylation at Tyr-1188 may also contribute to the interaction with SHC1. Isoform JM-A CYT-2 is constitutively phosphorylated on tyrosine residues in a ligand-independent manner. E4ICD2 but not E4ICD1 is phosphorylated on tyrosine residues. Ubiquitinated. During mitosis, the ERBB4 intracellular domain is ubiquitinated by the APC/C complex and targeted to proteasomal degradation. Isoform JM-A CYT-1 and isoform JM-B CYT-1 are ubiquitinated by WWP1. The ERBB4 intracellular domain (E4ICD1) is ubiquitinated, and this involves NEDD4. Expressed at highest levels in brain, heart, kidney, in addition to skeletal muscle, parathyroid, cerebellum, pituitary, spleen, testis and breast. Lower levels in thymus, lung, salivary gland, and pancreas. Isoform JM-A CYT-1 and isoform JM-B CYT-1 are expressed in cerebellum, but only the isoform JM-B is expressed in the heart.

Its subcellular location is the cell membrane. It localises to the nucleus. It is found in the mitochondrion. It carries out the reaction L-tyrosyl-[protein] + ATP = O-phospho-L-tyrosyl-[protein] + ADP + H(+). With respect to regulation, binding of a cognate ligand leads to dimerization and activation by autophosphorylation on tyrosine residues. In vitro kinase activity is increased by Mg(2+). Inhibited by PD153035, lapatinib, gefitinib (iressa, ZD1839), AG1478 and BIBX1382BS. Functionally, tyrosine-protein kinase that plays an essential role as cell surface receptor for neuregulins and EGF family members and regulates development of the heart, the central nervous system and the mammary gland, gene transcription, cell proliferation, differentiation, migration and apoptosis. Required for normal cardiac muscle differentiation during embryonic development, and for postnatal cardiomyocyte proliferation. Required for normal development of the embryonic central nervous system, especially for normal neural crest cell migration and normal axon guidance. Required for mammary gland differentiation, induction of milk proteins and lactation. Acts as cell-surface receptor for the neuregulins NRG1, NRG2, NRG3 and NRG4 and the EGF family members BTC, EREG and HBEGF. Ligand binding triggers receptor dimerization and autophosphorylation at specific tyrosine residues that then serve as binding sites for scaffold proteins and effectors. Ligand specificity and signaling is modulated by alternative splicing, proteolytic processing, and by the formation of heterodimers with other ERBB family members, thereby creating multiple combinations of intracellular phosphotyrosines that trigger ligand- and context-specific cellular responses. Mediates phosphorylation of SHC1 and activation of the MAP kinases MAPK1/ERK2 and MAPK3/ERK1. Isoform JM-A CYT-1 and isoform JM-B CYT-1 phosphorylate PIK3R1, leading to the activation of phosphatidylinositol 3-kinase and AKT1 and protect cells against apoptosis. Isoform JM-A CYT-1 and isoform JM-B CYT-1 mediate reorganization of the actin cytoskeleton and promote cell migration in response to NRG1. Isoform JM-A CYT-2 and isoform JM-B CYT-2 lack the phosphotyrosine that mediates interaction with PIK3R1, and hence do not phosphorylate PIK3R1, do not protect cells against apoptosis, and do not promote reorganization of the actin cytoskeleton and cell migration. Proteolytic processing of isoform JM-A CYT-1 and isoform JM-A CYT-2 gives rise to the corresponding soluble intracellular domains (4ICD) that translocate to the nucleus, promote nuclear import of STAT5A, activation of STAT5A, mammary epithelium differentiation, cell proliferation and activation of gene expression. The ERBB4 soluble intracellular domains (4ICD) colocalize with STAT5A at the CSN2 promoter to regulate transcription of milk proteins during lactation. The ERBB4 soluble intracellular domains can also translocate to mitochondria and promote apoptosis. This chain is Receptor tyrosine-protein kinase erbB-4 (ERBB4), found in Homo sapiens (Human).